We begin with the raw amino-acid sequence, 868 residues long: Protein translocase subunit SecA (868 aa).

Residues Gln88, 106–110, and Asp509 each bind ATP; that span reads GEGKT. Residues 816-827 show a composition bias toward polar residues; the sequence is NAENEPLNYNNQ. The segment at 816-868 is disordered; the sequence is NAENEPLNYNNQGEDENFTPEKKIPRNAPCPCGSGKKYKDCHGKSGPKKGIFA. Zn(2+) contacts are provided by Cys845, Cys847, Cys856, and His857.

Belongs to the SecA family. Monomer and homodimer. Part of the essential Sec protein translocation apparatus which comprises SecA, SecYEG and auxiliary proteins SecDF-YajC and YidC. The cofactor is Zn(2+).

The protein localises to the cell inner membrane. It is found in the cytoplasm. It carries out the reaction ATP + H2O + cellular proteinSide 1 = ADP + phosphate + cellular proteinSide 2.. Part of the Sec protein translocase complex. Interacts with the SecYEG preprotein conducting channel. Has a central role in coupling the hydrolysis of ATP to the transfer of proteins into and across the cell membrane, serving as an ATP-driven molecular motor driving the stepwise translocation of polypeptide chains across the membrane. In Campylobacter concisus (strain 13826), this protein is Protein translocase subunit SecA.